The primary structure comprises 481 residues: Aspartyl/glutamyl-tRNA(Asn/Gln) amidotransferase subunit B (481 aa).

The protein belongs to the GatB/GatE family. GatB subfamily. Heterotrimer of A, B and C subunits.

It carries out the reaction L-glutamyl-tRNA(Gln) + L-glutamine + ATP + H2O = L-glutaminyl-tRNA(Gln) + L-glutamate + ADP + phosphate + H(+). The catalysed reaction is L-aspartyl-tRNA(Asn) + L-glutamine + ATP + H2O = L-asparaginyl-tRNA(Asn) + L-glutamate + ADP + phosphate + 2 H(+). Allows the formation of correctly charged Asn-tRNA(Asn) or Gln-tRNA(Gln) through the transamidation of misacylated Asp-tRNA(Asn) or Glu-tRNA(Gln) in organisms which lack either or both of asparaginyl-tRNA or glutaminyl-tRNA synthetases. The reaction takes place in the presence of glutamine and ATP through an activated phospho-Asp-tRNA(Asn) or phospho-Glu-tRNA(Gln). This is Aspartyl/glutamyl-tRNA(Asn/Gln) amidotransferase subunit B from Pseudomonas putida (strain ATCC 700007 / DSM 6899 / JCM 31910 / BCRC 17059 / LMG 24140 / F1).